A 667-amino-acid polypeptide reads, in one-letter code: Mediator of RNA polymerase II transcription subunit 17 (667 aa).

A coiled-coil region spans residues 172–197 (KRRALQEAVQVLDMAQKQRQRASSNL).

Belongs to the Mediator complex subunit 17 family. In terms of assembly, component of the Mediator complex.

It is found in the nucleus. Functionally, component of the Mediator complex, a coactivator involved in regulated gene transcription of nearly all RNA polymerase II-dependent genes. Mediator functions as a bridge to convey information from gene-specific regulatory proteins to the basal RNA polymerase II transcription machinery. Mediator is recruited to promoters by direct interactions with regulatory proteins and serves as a scaffold for the assembly of a functional preinitiation complex with RNA polymerase II and the general transcription factors. This is Mediator of RNA polymerase II transcription subunit 17 (mdt-17) from Caenorhabditis elegans.